The primary structure comprises 342 residues: 4-hydroxy-2-oxovalerate aldolase (342 aa).

One can recognise a Pyruvate carboxyltransferase domain in the interval 7–259; sequence ILVHDMSLRD…CTGVDLGRIQ (253 aa). Residue 15–16 coordinates substrate; the sequence is RD. Mn(2+) is bound at residue Asp16. His19 acts as the Proton acceptor in catalysis. The substrate site is built by Ser169 and His198. 2 residues coordinate Mn(2+): His198 and His200. Tyr289 provides a ligand contact to substrate.

This sequence belongs to the 4-hydroxy-2-oxovalerate aldolase family.

It catalyses the reaction (S)-4-hydroxy-2-oxopentanoate = acetaldehyde + pyruvate. In Alkalilimnicola ehrlichii (strain ATCC BAA-1101 / DSM 17681 / MLHE-1), this protein is 4-hydroxy-2-oxovalerate aldolase.